Consider the following 97-residue polypeptide: MRIIAILAAILLVALQVRAGPLQARGDEAPGQEQRGPEDQDISISFAWDKSSALQVSGSTRGMVCSCRLVFCRRTELRVGNCLIGGVSFTYCCTRVD.

The N-terminal stretch at 1–19 is a signal peptide; that stretch reads MRIIAILAAILLVALQVRA. Residues 20–63 constitute a propeptide that is removed on maturation; the sequence is GPLQARGDEAPGQEQRGPEDQDISISFAWDKSSALQVSGSTRGM. Cystine bridges form between Cys65/Cys93, Cys67/Cys82, and Cys72/Cys92. A propeptide is located at residue Asp97.

The protein belongs to the alpha-defensin family. As to quaternary structure, homodimer; homodimerization seems to be required for killing S.aureus, but not E.coli. Interacts with CD4. Interacts with Bacillus anthracis lef; homodimerization is required for the interaction. In terms of processing, the three-dimensional structure formed by the three intramolecular disulfide bridges is indispensable for effective bacterial killing.

It localises to the secreted. Its subcellular location is the cytoplasmic vesicle. The protein resides in the secretory vesicle. Functionally, host-defense peptide that has antimicrobial activity against Gram-negative bacteria, and to a lesser extent also against Gram-positive bacteria and fungi. Exhibits antimicrobial activity against Gram-negative E.coli and E.aerogenes and Gram-positive S.faecalis, S.aureus and B.cereus and the yeast C.albicans (in vitro). Inhibits corticotropin (ACTH)-stimulated corticosterone production (in vitro). Inhibits enzymatic activity of B.anthracis lef/anthrax lethal factor (in vitro). In Pan troglodytes (Chimpanzee), this protein is Defensin alpha 4 (DEFA4).